Here is a 136-residue protein sequence, read N- to C-terminus: Evasin P991 (136 aa).

An N-terminal signal peptide occupies residues 1 to 28 (MHSTIVYACLLALAVFVALHGTPLAALA). N-linked (GlcNAc...) asparagine glycosylation is found at Asn41, Asn61, Asn64, Asn78, Asn92, Asn100, and Asn122. 4 disulfides stabilise this stretch: Cys55/Cys77, Cys73/Cys114, Cys90/Cys119, and Cys109/Cys128.

The protein localises to the secreted. Functionally, salivary chemokine-binding protein which has chemokine-neutralizing activity and binds to host chemokines CCL2, CCL3, CCL3L1, CCL4, CCL4L1, CCL5, CCL6, CCL7, CCL8, CCL9, CCL11, CCL12, CCL13, CCL14, CCL16, CCL17, CCL18, CCL19, CCL22, CCL23, CCL24 and CCL27. This chain is Evasin P991, found in Amblyomma cajennense (Cayenne tick).